We begin with the raw amino-acid sequence, 367 residues long: UDP-N-acetylglucosamine--N-acetylmuramyl-(pentapeptide) pyrophosphoryl-undecaprenol N-acetylglucosamine transferase (367 aa).

UDP-N-acetyl-alpha-D-glucosamine contacts are provided by residues 15–17 (TGG), Asn127, Arg163, Ser191, Ile249, and Gln294.

The protein belongs to the glycosyltransferase 28 family. MurG subfamily.

Its subcellular location is the cell inner membrane. It carries out the reaction di-trans,octa-cis-undecaprenyl diphospho-N-acetyl-alpha-D-muramoyl-L-alanyl-D-glutamyl-meso-2,6-diaminopimeloyl-D-alanyl-D-alanine + UDP-N-acetyl-alpha-D-glucosamine = di-trans,octa-cis-undecaprenyl diphospho-[N-acetyl-alpha-D-glucosaminyl-(1-&gt;4)]-N-acetyl-alpha-D-muramoyl-L-alanyl-D-glutamyl-meso-2,6-diaminopimeloyl-D-alanyl-D-alanine + UDP + H(+). It participates in cell wall biogenesis; peptidoglycan biosynthesis. Functionally, cell wall formation. Catalyzes the transfer of a GlcNAc subunit on undecaprenyl-pyrophosphoryl-MurNAc-pentapeptide (lipid intermediate I) to form undecaprenyl-pyrophosphoryl-MurNAc-(pentapeptide)GlcNAc (lipid intermediate II). In Burkholderia pseudomallei (strain 668), this protein is UDP-N-acetylglucosamine--N-acetylmuramyl-(pentapeptide) pyrophosphoryl-undecaprenol N-acetylglucosamine transferase.